Reading from the N-terminus, the 274-residue chain is Large ribosomal subunit protein uL2 (274 aa).

Residues 221-274 (RGTAMNPVDHPHGGGEGRNFGKHPVTPWGVQTKGKKTRSNKRTDKFIVRRRSKK) are disordered.

The protein belongs to the universal ribosomal protein uL2 family. In terms of assembly, part of the 50S ribosomal subunit. Forms a bridge to the 30S subunit in the 70S ribosome.

One of the primary rRNA binding proteins. Required for association of the 30S and 50S subunits to form the 70S ribosome, for tRNA binding and peptide bond formation. It has been suggested to have peptidyltransferase activity; this is somewhat controversial. Makes several contacts with the 16S rRNA in the 70S ribosome. This is Large ribosomal subunit protein uL2 from Yersinia enterocolitica.